We begin with the raw amino-acid sequence, 653 residues long: UvrABC system protein B (653 aa).

In terms of domain architecture, Helicase ATP-binding spans 25–182 (EGIERGVREQ…EKLVELQYKS (158 aa)). 38 to 45 (GVTGSGKT) is a binding site for ATP. Positions 91–114 (YYDYYQPEAYIPHSDVYIEKDALI) match the Beta-hairpin motif. One can recognise a Helicase C-terminal domain in the interval 429 to 591 (QIADVVNESQ…ITPKSISKSV (163 aa)). The 36-residue stretch at 616–651 (EEDIIKLQKEMLLHAENLEFEKALEIRNQINKLSQH) folds into the UVR domain.

This sequence belongs to the UvrB family. In terms of assembly, forms a heterotetramer with UvrA during the search for lesions. Interacts with UvrC in an incision complex.

The protein resides in the cytoplasm. In terms of biological role, the UvrABC repair system catalyzes the recognition and processing of DNA lesions. A damage recognition complex composed of 2 UvrA and 2 UvrB subunits scans DNA for abnormalities. Upon binding of the UvrA(2)B(2) complex to a putative damaged site, the DNA wraps around one UvrB monomer. DNA wrap is dependent on ATP binding by UvrB and probably causes local melting of the DNA helix, facilitating insertion of UvrB beta-hairpin between the DNA strands. Then UvrB probes one DNA strand for the presence of a lesion. If a lesion is found the UvrA subunits dissociate and the UvrB-DNA preincision complex is formed. This complex is subsequently bound by UvrC and the second UvrB is released. If no lesion is found, the DNA wraps around the other UvrB subunit that will check the other stand for damage. The sequence is that of UvrABC system protein B from Anaplasma phagocytophilum (strain HZ).